Here is a 331-residue protein sequence, read N- to C-terminus: MNPIPSWPGRGRVTLVLLAVVPVALAYPWQSTRDYVLLGVAAAVVIGLFGFWRGLYFTTIARRGLAILRRRRRIAEPATCTRTTVLVWVGPPASDTNVLPLTLIARYLDRYGIRADTIRITSRVTASGDCRTWVGLTVVADDNLAALQARSARIPLQETAQVAARRLADHLREIGWEAGTAAPDEIPALVAADSRETWRGMRHTDSDYVAAYRVSANAELPDTLPAIRSRPAQETWIALEIAYAAGSSTRYTVAAACALRTDWRPGGTAPVAGLLPQHGNHVPALTALDPRSTRRLDGHTDAPADLLTRLHWPTPTAGAHRAPLTNAVSRT.

2 consecutive transmembrane segments (helical) span residues 11 to 31 (GRVT…PWQS) and 37 to 57 (LLGV…GLYF).

Belongs to the EccE family. In terms of assembly, part of the ESX-3 / type VII secretion system (T7SS), which is composed of cytosolic and membrane components. The ESX-3 membrane complex is composed of EccB3, EccC3, EccD3 and EccE3.

It localises to the cell inner membrane. In terms of biological role, part of the ESX-3 specialized secretion system, which is important for iron and zinc uptake or homeostasis. The protein is ESX-3 secretion system protein EccE3 of Mycobacterium tuberculosis (strain ATCC 25618 / H37Rv).